A 260-amino-acid polypeptide reads, in one-letter code: Acetylglutamate kinase (260 aa).

Residues 46–47 (GG), R68, and N160 contribute to the substrate site.

This sequence belongs to the acetylglutamate kinase family. ArgB subfamily.

It localises to the cytoplasm. It catalyses the reaction N-acetyl-L-glutamate + ATP = N-acetyl-L-glutamyl 5-phosphate + ADP. It functions in the pathway amino-acid biosynthesis; L-arginine biosynthesis; N(2)-acetyl-L-ornithine from L-glutamate: step 2/4. Catalyzes the ATP-dependent phosphorylation of N-acetyl-L-glutamate. In Shewanella sp. (strain W3-18-1), this protein is Acetylglutamate kinase.